The following is an 856-amino-acid chain: FO synthase (856 aa).

Radical SAM core domains lie at 84 to 336 (ISYS…APPN) and 544 to 785 (VTFV…SHIQ). Positions 85–417 (SYSRKVFIPV…PRVRGHVVAL (333 aa)) are cofG-like. 6 residues coordinate [4Fe-4S] cluster: Cys98, Cys102, Cys105, Cys558, Cys562, and Cys565. The segment at 521 to 854 (DGPALEAVAA…RQRTTTYALL (334 aa)) is cofH-like.

The protein in the N-terminal section; belongs to the radical SAM superfamily. CofG family. This sequence in the C-terminal section; belongs to the radical SAM superfamily. CofH family. Requires [4Fe-4S] cluster as cofactor.

The catalysed reaction is 5-amino-6-(D-ribitylamino)uracil + L-tyrosine + S-adenosyl-L-methionine = 5-amino-5-(4-hydroxybenzyl)-6-(D-ribitylimino)-5,6-dihydrouracil + 2-iminoacetate + 5'-deoxyadenosine + L-methionine + H(+). It carries out the reaction 5-amino-5-(4-hydroxybenzyl)-6-(D-ribitylimino)-5,6-dihydrouracil + S-adenosyl-L-methionine = 7,8-didemethyl-8-hydroxy-5-deazariboflavin + 5'-deoxyadenosine + L-methionine + NH4(+) + H(+). The protein operates within cofactor biosynthesis; coenzyme F0 biosynthesis. In terms of biological role, catalyzes the radical-mediated synthesis of 7,8-didemethyl-8-hydroxy-5-deazariboflavin (FO) from 5-amino-6-(D-ribitylamino)uracil and L-tyrosine. This Mycobacterium bovis (strain ATCC BAA-935 / AF2122/97) protein is FO synthase (fbiC).